The sequence spans 207 residues: Ras-related protein RABH1d (207 aa).

16–23 (GDQSVGKT) contributes to the GTP binding site. The short motif at 38–46 (YQATIGIDF) is the Effector region element. Residues 64 to 68 (DTAGQ), 122 to 125 (NKTD), and 152 to 153 (SA) each bind GTP. S-geranylgeranyl cysteine attachment occurs at residues C205 and C207. At C207 the chain carries Cysteine methyl ester.

The protein belongs to the small GTPase superfamily. Rab family.

It is found in the golgi apparatus membrane. In terms of biological role, protein transport. Regulator of membrane traffic from the Golgi apparatus towards the endoplasmic reticulum (ER). The sequence is that of Ras-related protein RABH1d (RABH1D) from Arabidopsis thaliana (Mouse-ear cress).